The sequence spans 131 residues: Small ribosomal subunit protein uS8 (131 aa).

It belongs to the universal ribosomal protein uS8 family. Part of the 30S ribosomal subunit. Contacts proteins S5 and S12.

One of the primary rRNA binding proteins, it binds directly to 16S rRNA central domain where it helps coordinate assembly of the platform of the 30S subunit. In Helicobacter acinonychis (strain Sheeba), this protein is Small ribosomal subunit protein uS8.